The sequence spans 319 residues: Ribosomal large subunit pseudouridine synthase C (319 aa).

Residues 20 to 83 enclose the S4 RNA-binding domain; sequence QRIDNFLRTQ…AEREEEAVSP (64 aa). Aspartate 144 is an active-site residue.

Belongs to the pseudouridine synthase RluA family.

It carries out the reaction uridine(955/2504/2580) in 23S rRNA = pseudouridine(955/2504/2580) in 23S rRNA. Functionally, responsible for synthesis of pseudouridine from uracil at positions 955, 2504 and 2580 in 23S ribosomal RNA. The polypeptide is Ribosomal large subunit pseudouridine synthase C (rluC) (Escherichia coli O157:H7).